The primary structure comprises 335 residues: Nucleoid-associated protein PputW619_4243 (335 aa).

The protein belongs to the YejK family.

Its subcellular location is the cytoplasm. The protein localises to the nucleoid. The protein is Nucleoid-associated protein PputW619_4243 of Pseudomonas putida (strain W619).